The chain runs to 412 residues: Subtilisin-like protease 6 (412 aa).

A signal peptide spans 1–20; it reads MGFITKAIPIVLAALSTVNG. The propeptide occupies 21 to 127; it reads ARILEAGPHA…VRTTTNGTNL (107 aa). One can recognise an Inhibitor I9 domain in the interval 36–120; the sequence is KYIVVMKKDV…FIEPDFVVRT (85 aa). Residues 135–412 form the Peptidase S8 domain; sequence SWGLARVGSK…SKLIYNGSGK (278 aa). Catalysis depends on charge relay system residues Asp-167 and His-198. 2 N-linked (GlcNAc...) asparagine glycosylation sites follow: Asn-252 and Asn-264. Ser-358 functions as the Charge relay system in the catalytic mechanism. The N-linked (GlcNAc...) asparagine glycan is linked to Asn-408.

It belongs to the peptidase S8 family.

Its subcellular location is the secreted. Functionally, secreted subtilisin-like serine protease with keratinolytic activity that contributes to pathogenicity. This Arthroderma benhamiae (strain ATCC MYA-4681 / CBS 112371) (Trichophyton mentagrophytes) protein is Subtilisin-like protease 6 (SUB6).